The sequence spans 394 residues: Glutamyl-tRNA reductase (394 aa).

Residues 45–48, serine 99, 104–106, and glutamine 110 each bind substrate; these read TCNR and EEQ. Cysteine 46 acts as the Nucleophile in catalysis. NADP(+) is bound at residue 175-180; that stretch reads GLGNIG.

Belongs to the glutamyl-tRNA reductase family. As to quaternary structure, homodimer.

The catalysed reaction is (S)-4-amino-5-oxopentanoate + tRNA(Glu) + NADP(+) = L-glutamyl-tRNA(Glu) + NADPH + H(+). It functions in the pathway porphyrin-containing compound metabolism; protoporphyrin-IX biosynthesis; 5-aminolevulinate from L-glutamyl-tRNA(Glu): step 1/2. Its function is as follows. Catalyzes the NADPH-dependent reduction of glutamyl-tRNA(Glu) to glutamate 1-semialdehyde (GSA). This chain is Glutamyl-tRNA reductase, found in Caldicellulosiruptor saccharolyticus (strain ATCC 43494 / DSM 8903 / Tp8T 6331).